The following is a 327-amino-acid chain: GTPase Obg (327 aa).

One can recognise an Obg domain in the interval 2–160 (HLFKDSLNLI…LNLRLELSLI (159 aa)). The OBG-type G domain occupies 161–326 (ADIGLVGLPN…LVSEFFSLVK (166 aa)). Residues 167–174 (GLPNAGKS), 192–196 (FTTKI), 213–216 (DLPG), 280–283 (SKLD), and 307–309 (SIY) contribute to the GTP site. Mg(2+)-binding residues include S174 and T194.

It belongs to the TRAFAC class OBG-HflX-like GTPase superfamily. OBG GTPase family. In terms of assembly, monomer. Requires Mg(2+) as cofactor.

It is found in the cytoplasm. An essential GTPase which binds GTP, GDP and possibly (p)ppGpp with moderate affinity, with high nucleotide exchange rates and a fairly low GTP hydrolysis rate. Plays a role in control of the cell cycle, stress response, ribosome biogenesis and in those bacteria that undergo differentiation, in morphogenesis control. The protein is GTPase Obg of Borrelia duttonii (strain Ly).